We begin with the raw amino-acid sequence, 122 residues long: Large ribosomal subunit protein uL18 (122 aa).

The protein belongs to the universal ribosomal protein uL18 family. As to quaternary structure, part of the 50S ribosomal subunit; part of the 5S rRNA/L5/L18/L25 subcomplex. Contacts the 5S and 23S rRNAs.

This is one of the proteins that bind and probably mediate the attachment of the 5S RNA into the large ribosomal subunit, where it forms part of the central protuberance. This Mycobacterium leprae (strain TN) protein is Large ribosomal subunit protein uL18.